Consider the following 495-residue polypeptide: Methyl viologen resistance protein SmvA (495 aa).

A run of 14 helical transmembrane segments spans residues 5-25 (WLTLVIIVLVYIPVAIDATVL), 44-64 (LWIIDIYSLVMAGMVLPMGAL), 73-93 (LLMLGGTLFGLASLAAAFSHT), 96-116 (WLIATRVLLAIGAAMIVPATL), 135-155 (VWAAVGSGGAAFGPLIGGILL), 158-178 (FYWGSVFLINVPIVLVVMGLT), 192-212 (PLNLGHAVMLIIAILLLVYSA), 220-240 (LSLWVISFTLLTGALLLGLFI), 260-280 (IILSGVVMAMTAMITLVGFEL), 299-319 (VFMLPVMVASGFSGPIAGVLV), 327-347 (VATGGMALSALSFYGLAMTDF), 357-377 (LMALLGFSAASALLASTSAIM), 391-411 (IETMAYELGAGLGIAIFGLLL), and 469-489 (VALSSAGSMLLLLAVGMWFSL).

The protein belongs to the major facilitator superfamily. TCR/Tet family.

It localises to the cell inner membrane. In terms of biological role, major efflux pump for acriflavine and other quaternary ammonium compounds (QACs). Also required for resistance to methyl viologen. In Salmonella typhimurium (strain LT2 / SGSC1412 / ATCC 700720), this protein is Methyl viologen resistance protein SmvA (smvA).